A 147-amino-acid chain; its full sequence is MFRGGTPVSLDNKGRLAVPARYRETLISLCAGHLIVTADPSKCLLIYPQPVWEPIEQKLNSLSSFNPQTRSLQRLLVGNACDVEMDGVGRILVPPSLRAFAGLNKEVVLVGQGAKFELWDSEKWNLQMESALAFRDGIPQELEGFSL.

SpoVT-AbrB domains lie at 5 to 51 (GTPV…PQPV) and 80 to 123 (ACDV…DSEK).

It belongs to the MraZ family. As to quaternary structure, forms oligomers.

It is found in the cytoplasm. It localises to the nucleoid. This Nitrosospira multiformis (strain ATCC 25196 / NCIMB 11849 / C 71) protein is Transcriptional regulator MraZ.